The chain runs to 487 residues: L-tartrate/succinate antiporter (487 aa).

A run of 14 helical transmembrane segments spans residues 10–30, 33–53, 54–74, 93–113, 137–157, 189–209, 236–256, 292–312, 313–333, 340–360, 370–390, 393–413, 418–438, and 465–485; these read YLAP…AGLE, TWLY…EPVP, GAVV…WLLF, WAVS…FMFG, TLFL…VTPS, IGSY…AIFL, FLGM…LAYV, LMVG…AAMV, GYSV…DIVS, VFFW…TGFI, SLSG…FYLL, FFAS…AAAL, IPLP…SILT, and IFGL…MPVV.

The protein belongs to the SLC13A/DASS transporter (TC 2.A.47) family. DIT1 subfamily.

It is found in the cell inner membrane. It carries out the reaction (2R,3R)-tartrate(out) + succinate(in) = (2R,3R)-tartrate(in) + succinate(out). Its function is as follows. Catalyzes the uptake of tartrate in exchange for intracellular succinate. Essential for anaerobic L-tartrate fermentation. This Escherichia coli O6:K15:H31 (strain 536 / UPEC) protein is L-tartrate/succinate antiporter (ttdT).